Here is a 976-residue protein sequence, read N- to C-terminus: Apical junction component 1 homolog (976 aa).

The tract at residues 21–49 (ATPGPASKCSPCERSVARPAEPAPFNKRH) is disordered. Ser-52 is modified (phosphoserine). Disordered regions lie at residues 61–136 (GPAM…EPAY), 220–242 (PQFH…PTPS), and 264–294 (YAER…RGSF). The span at 98–113 (RAPPGLTPAPASPPVL) shows a compositional bias: pro residues. A compositionally biased stretch (basic and acidic residues) spans 116–134 (RGREAQRAARAEASPRREP). At Ser-129 the chain carries Phosphoserine. Residue Arg-322 is modified to Omega-N-methylarginine. The tract at residues 412-443 (LQVVPPSDPDPLLASWHGGTGTSPPRLATDSR) is disordered. Ser-468, Ser-509, and Ser-512 each carry phosphoserine. Disordered stretches follow at residues 539 to 574 (DLRA…SGRQ) and 614 to 660 (LDSR…ADED). Low complexity-rich tracts occupy residues 616–625 (SRPAGSGAPA) and 633–655 (PASA…SPEP). Arg-749 carries the post-translational modification Asymmetric dimethylarginine; alternate. Arg-749 is modified (omega-N-methylarginine; alternate). The segment at 855–888 (GSPARPPPARSREPDMETLILTPPPGTAGLDQDG) is disordered.

Its subcellular location is the apical cell membrane. It localises to the cell projection. The protein localises to the cilium. The protein resides in the cell junction. It is found in the adherens junction. May be involved in the control of adherens junction integrity. The protein is Apical junction component 1 homolog of Homo sapiens (Human).